Reading from the N-terminus, the 169-residue chain is S-ribosylhomocysteine lyase (169 aa).

Fe cation is bound by residues histidine 54, histidine 58, and cysteine 129.

This sequence belongs to the LuxS family. As to quaternary structure, homodimer. Fe cation is required as a cofactor.

It catalyses the reaction S-(5-deoxy-D-ribos-5-yl)-L-homocysteine = (S)-4,5-dihydroxypentane-2,3-dione + L-homocysteine. Involved in the synthesis of autoinducer 2 (AI-2) which is secreted by bacteria and is used to communicate both the cell density and the metabolic potential of the environment. The regulation of gene expression in response to changes in cell density is called quorum sensing. Catalyzes the transformation of S-ribosylhomocysteine (RHC) to homocysteine (HC) and 4,5-dihydroxy-2,3-pentadione (DPD). In Actinobacillus pleuropneumoniae serotype 5b (strain L20), this protein is S-ribosylhomocysteine lyase.